Reading from the N-terminus, the 200-residue chain is Probable molybdenum cofactor guanylyltransferase (200 aa).

GTP-binding positions include 9-11 (LAG), Lys21, Asp69, and Asp100. Residue Asp100 coordinates Mg(2+).

The protein belongs to the MobA family. Requires Mg(2+) as cofactor.

The protein localises to the cytoplasm. It catalyses the reaction Mo-molybdopterin + GTP + H(+) = Mo-molybdopterin guanine dinucleotide + diphosphate. Its function is as follows. Transfers a GMP moiety from GTP to Mo-molybdopterin (Mo-MPT) cofactor (Moco or molybdenum cofactor) to form Mo-molybdopterin guanine dinucleotide (Mo-MGD) cofactor. The polypeptide is Probable molybdenum cofactor guanylyltransferase (Bacillus cereus (strain AH187)).